Reading from the N-terminus, the 298-residue chain is ATP synthase gamma chain (298 aa).

Belongs to the ATPase gamma chain family. F-type ATPases have 2 components, CF(1) - the catalytic core - and CF(0) - the membrane proton channel. CF(1) has five subunits: alpha(3), beta(3), gamma(1), delta(1), epsilon(1). CF(0) has three main subunits: a, b and c.

Its subcellular location is the cell membrane. Functionally, produces ATP from ADP in the presence of a proton gradient across the membrane. The gamma chain is believed to be important in regulating ATPase activity and the flow of protons through the CF(0) complex. This chain is ATP synthase gamma chain, found in Mycobacterium leprae (strain Br4923).